The chain runs to 383 residues: Ovalbumin (383 aa).

Residue Gly2 is modified to N-acetylglycine. Residues 22–48 constitute a signal peptide (not cleaved); sequence HHANDNMLYSPFAILSTLAMVFLGAKD. Ser69 is subject to Phosphoserine. A disulfide bridge connects residues Cys74 and Cys121. N-linked (GlcNAc...) asparagine glycans are attached at residues Asn293 and Asn312. Phosphoserine is present on Ser345.

It belongs to the serpin family. Ov-serpin subfamily. Post-translationally, the signal sequence is not cleaved. The functional signal for membrane translocation of ovalbumin becomes accessible when the nascent chain is 50 to 60 residues long. The hydrophobic sequence which lies between residues 27 and 43 folds back on the preceding residues to form an amphipathic hairpin structure which is the signal element recognized by the membrane. As to expression, major protein of egg white.

It localises to the secreted. In terms of biological role, storage protein of egg white. Lack protease inhibitory activity. This Coturnix japonica (Japanese quail) protein is Ovalbumin (SERPINB14).